We begin with the raw amino-acid sequence, 942 residues long: Alpha,alpha-trehalose-phosphate synthase [UDP-forming] 1 (942 aa).

The tract at residues 28–57 is disordered; that stretch reads REKRKSNRARNPNDVAGSSENSENDLRLEG. The glycosyltransferase stretch occupies residues 92–559; that stretch reads QRLLVVANRL…AETFVSELND (468 aa). Residues 815–892 form a disordered region; the sequence is DMPAIARSRP…LGNSRRPSPE (78 aa). Low complexity-rich tracts occupy residues 821–833 and 841–867; these read RSRP…AKSS and SKST…NKSS. Polar residues predominate over residues 879-888; that stretch reads SNHSLGNSRR.

The protein in the N-terminal section; belongs to the glycosyltransferase 20 family. It in the C-terminal section; belongs to the trehalose phosphatase family. In terms of tissue distribution, expressed in seedlings, leaves, roots, stems, flowers and siliques.

Its subcellular location is the vacuole. It is found in the secreted. It localises to the cell wall. The protein resides in the cytoplasm. The catalysed reaction is D-glucose 6-phosphate + UDP-alpha-D-glucose = alpha,alpha-trehalose 6-phosphate + UDP + H(+). Required for normal embryo development, vegetative growth and transition to flowering. Regulates embryo growth, cell wall deposition, starch and sucrose degradation, but not cell differentiation. Involved in the regulation of glucose sensing and signaling genes during plant development. The sequence is that of Alpha,alpha-trehalose-phosphate synthase [UDP-forming] 1 from Arabidopsis thaliana (Mouse-ear cress).